Reading from the N-terminus, the 420-residue chain is MTKWKRANPNGTRDYLFEECTLIEEVEQKLRLTFLERGYEEIRTPTIEFYDVFAFQNRPIDEEKMYKFFDEKGRIIVLRPDMTIPLARVIGTQRWDTPLKVTYSGNVFRANESHSGKYNEIVQSGIEVIGIDNVRAEIECVISVIQALQKLKVQSFTIEIGQVQLYKCIVKKLSIQDEEERVLRTYIESKNYAALSNFIGEKKLDRCDETVRLLEKLPRLFGNLEVIEEAEKLASSNEMKMAIARVKEMYETIEMLGYGSYISIDLGMIQHLDYYTGVIFKGYIYEIGEEIVSGGRYDELIGNFGEMLPAVGLAVQVNQIVKALQEQQEPYERNQIDIVIHYELNRLAEAERLRNLLRKDGKNAWLSLFSNLSDTFQFARKNKIGTVVEAQNEYLVEYVWNEKWVVQKEGEASCVTFKLR.

Belongs to the class-II aminoacyl-tRNA synthetase family. HisZ subfamily. Heteromultimer composed of HisG and HisZ subunits.

It localises to the cytoplasm. The protein operates within amino-acid biosynthesis; L-histidine biosynthesis; L-histidine from 5-phospho-alpha-D-ribose 1-diphosphate: step 1/9. In terms of biological role, required for the first step of histidine biosynthesis. May allow the feedback regulation of ATP phosphoribosyltransferase activity by histidine. The sequence is that of ATP phosphoribosyltransferase regulatory subunit from Bacillus cereus (strain ATCC 14579 / DSM 31 / CCUG 7414 / JCM 2152 / NBRC 15305 / NCIMB 9373 / NCTC 2599 / NRRL B-3711).